The chain runs to 942 residues: Alpha,alpha-trehalose-phosphate synthase [UDP-forming] 1 (942 aa).

Positions 28 to 57 (REKRKSNRARNPNDVAGSSENSENDLRLEG) are disordered. The segment at 92-559 (QRLLVVANRL…AETFVSELND (468 aa)) is glycosyltransferase. The interval 815-892 (DMPAIARSRP…LGNSRRPSPE (78 aa)) is disordered. Composition is skewed to low complexity over residues 821–833 (RSRPSSDSGAKSS) and 841–867 (SKSTHNNNKSGSKSSSSSNSNNNNKSS). Residues 879–888 (SNHSLGNSRR) are compositionally biased toward polar residues.

This sequence in the N-terminal section; belongs to the glycosyltransferase 20 family. It in the C-terminal section; belongs to the trehalose phosphatase family. Expressed in seedlings, leaves, roots, stems, flowers and siliques.

The protein localises to the vacuole. The protein resides in the secreted. It localises to the cell wall. Its subcellular location is the cytoplasm. It carries out the reaction D-glucose 6-phosphate + UDP-alpha-D-glucose = alpha,alpha-trehalose 6-phosphate + UDP + H(+). Functionally, required for normal embryo development, vegetative growth and transition to flowering. Regulates embryo growth, cell wall deposition, starch and sucrose degradation, but not cell differentiation. Involved in the regulation of glucose sensing and signaling genes during plant development. This is Alpha,alpha-trehalose-phosphate synthase [UDP-forming] 1 from Arabidopsis thaliana (Mouse-ear cress).